The primary structure comprises 381 residues: Creatine kinase M-type (381 aa).

One can recognise a Phosphagen kinase N-terminal domain in the interval 11–98 (KLNYKSEEEY…FDPIIQDRHG (88 aa)). The 243-residue stretch at 125 to 367 (YVLSSRVRTG…KLMVEMEKKL (243 aa)) folds into the Phosphagen kinase C-terminal domain. Residue 128-132 (SSRVR) coordinates ATP. Ser164 carries the phosphoserine modification. Thr166 carries the post-translational modification Phosphothreonine. Ser178 is modified (phosphoserine). Thr180 carries the phosphothreonine modification. His191 is a binding site for ATP. Residue Ser199 is modified to Phosphoserine. Arg236 and Arg292 together coordinate ATP. Phosphothreonine is present on residues Thr313 and Thr322. 320-325 (RGTGGV) lines the ATP pocket. The residue at position 372 (Ser372) is a Phosphoserine.

The protein belongs to the ATP:guanido phosphotransferase family. In terms of assembly, dimer of identical or non-identical chains, which can be either B (brain type) or M (muscle type). With MM being the major form in skeletal muscle and myocardium, MB existing in myocardium, and BB existing in many tissues, especially brain.

The catalysed reaction is creatine + ATP = N-phosphocreatine + ADP + H(+). Functionally, reversibly catalyzes the transfer of phosphate between ATP and various phosphogens (e.g. creatine phosphate). Creatine kinase isoenzymes play a central role in energy transduction in tissues with large, fluctuating energy demands, such as skeletal muscle, heart, brain and spermatozoa. In Oryctolagus cuniculus (Rabbit), this protein is Creatine kinase M-type (CKM).